We begin with the raw amino-acid sequence, 298 residues long: Enoyl-CoA hydratase ACTT6 (298 aa).

Belongs to the enoyl-CoA hydratase/isomerase family.

The protein operates within mycotoxin biosynthesis. Its function is as follows. Enoyl-CoA hydratase; part of the gene clusters that mediate the biosynthesis of the host-selective toxins (HSTs) ACT-toxins responsible for brown spot of tangerine disease by the tangerine pathotype which affects tangerines and mandarins. ACT-toxins consist of three moieties, 9,10-epoxy-8-hydroxy-9-methyl-decatrienoic acid (EDA), valine and a polyketide. ACT-toxin I is toxic to both citrus and pear; toxin II the 5''-deoxy derivative of ACT-toxin I, is highly toxic to pear and slightly toxic to citrus. On cellular level, ACT-toxins affect plasma membrane of susceptible cells and cause a sudden increase in loss of K(+) after a few minutes of toxin treatment. The acyl-CoA ligase ACTT1, the hydrolase ACTT2, the enoyl-CoA hydratases ACTT3 and ACTT6, and the acyl-CoA synthetase ACTT5 are all involved in the biosynthesis of the AK-, AF- and ACT-toxin common 9,10-epoxy-8-hydroxy-9-methyl-decatrienoic acid (EDA) structural moiety. The exact role of each enzyme, and of additional enzymes identified within the AF-toxin clusters have still to be determined. On the other hand, ACTTS1 to ACTTS4 are specific to the tangerine pathotype. The function of ACTTS3 is to elongate the polyketide chain portion of ACT-toxin that is unique to this toxin. The enoyl-reductase ACTTS2 might complement the missing enoyl-reductase (ER) domain in ACTTS3 in the synthesis of the polyketide portion of ACT-toxin. The roles of the nonribosomal peptide synthetases-related proteins ACTTS1 and ACTTS4 have also still not been elucidated. This chain is Enoyl-CoA hydratase ACTT6, found in Alternaria alternata (Alternaria rot fungus).